The sequence spans 94 residues: C-C motif chemokine 26 (94 aa).

The signal sequence occupies residues 1 to 23 (MKSFPVAFLVLLIFILSVHRGVT). 2 cysteine pairs are disulfide-bonded: C33–C57 and C34–C73.

Belongs to the intercrine beta (chemokine CC) family. Monomer.

It localises to the secreted. Chemoattractant for eosinophils and basophils. Acts as a ligand for C-C chemokine receptor CCR3 which triggers Ca(2+) mobilization in eosinophils. Also acts as a ligand for CX3C chemokine receptor CX3CR1, inducing cell chemotaxis. In Canis lupus familiaris (Dog), this protein is C-C motif chemokine 26.